We begin with the raw amino-acid sequence, 266 residues long: 3-deoxy-manno-octulosonate cytidylyltransferase 1 (266 aa).

It belongs to the KdsB family.

It is found in the cytoplasm. The enzyme catalyses 3-deoxy-alpha-D-manno-oct-2-ulosonate + CTP = CMP-3-deoxy-beta-D-manno-octulosonate + diphosphate. Its pathway is nucleotide-sugar biosynthesis; CMP-3-deoxy-D-manno-octulosonate biosynthesis; CMP-3-deoxy-D-manno-octulosonate from 3-deoxy-D-manno-octulosonate and CTP: step 1/1. It functions in the pathway bacterial outer membrane biogenesis; lipopolysaccharide biosynthesis. In terms of biological role, activates KDO (a required 8-carbon sugar) for incorporation into bacterial lipopolysaccharide in Gram-negative bacteria. The chain is 3-deoxy-manno-octulosonate cytidylyltransferase 1 from Paraburkholderia phytofirmans (strain DSM 17436 / LMG 22146 / PsJN) (Burkholderia phytofirmans).